The chain runs to 591 residues: L-fucose isomerase (591 aa).

Active-site proton acceptor residues include Glu-337 and Asp-361. Residues Glu-337, Asp-361, and His-528 each coordinate Mn(2+).

This sequence belongs to the L-fucose isomerase family. In terms of assembly, homohexamer. It depends on Mn(2+) as a cofactor.

Its subcellular location is the cytoplasm. It carries out the reaction L-fucose = L-fuculose. It functions in the pathway carbohydrate degradation; L-fucose degradation; L-lactaldehyde and glycerone phosphate from L-fucose: step 1/3. Its function is as follows. Converts the aldose L-fucose into the corresponding ketose L-fuculose. The sequence is that of L-fucose isomerase from Escherichia coli (strain 55989 / EAEC).